Here is a 267-residue protein sequence, read N- to C-terminus: Cilia- and flagella-associated protein 300 (267 aa).

Belongs to the CFAP300 family.

It is found in the cytoplasm. The protein localises to the cytoskeleton. Its subcellular location is the cilium axoneme. In terms of biological role, cilium- and flagellum-specific protein that plays a role in axonemal structure organization and motility. May play a role in outer and inner dynein arm assembly. This chain is Cilia- and flagella-associated protein 300, found in Xenopus tropicalis (Western clawed frog).